The following is a 399-amino-acid chain: PCI domain-containing protein 2 (399 aa).

The residue at position 2 (Ala-2) is an N-acetylalanine. A Phosphoserine modification is found at Ser-45. A PCI domain is found at 210 to 391 (ITYKYYVGRK…QKLVVSKQNP (182 aa)).

This sequence belongs to the CSN12 family. In terms of assembly, component of the nuclear pore complex (NPC)-associated TREX-2 complex (transcription and export complex 2), composed of at least GANP, 2 copies of ENY2, PCID2, SEM1/DSS1, and either centrin CETN2 or centrin CETN3. The TREX-2 complex also associates with ALYREF/ALY and with the nucleoporin NUP153. Interacts with BRCA2. Interacts with SRCAP chromatin remodeling complex component ZNHIT1; the interaction results in inhibition of SRCAP complex activity, preventing the deposition of histone variant H2AZ1/H2A.Z to lymphoid fate regulator genes and restricting lymphoid lineage commitment. In terms of tissue distribution, highly expressed in bone marrow and haematopoietic progenitor cells but is almost undetectable in mature blood cells.

The protein localises to the cytoplasm. It localises to the nucleus. The protein resides in the nuclear pore complex. Its function is as follows. Required for B-cell survival through the regulation of the expression of cell-cycle checkpoint MAD2L1 protein during B cell differentiation. As a component of the TREX-2 complex, involved in the export of mRNAs to the cytoplasm through the nuclear pores. Binds and stabilizes BRCA2 and is thus involved in the control of R-loop-associated DNA damage and transcription-associated genomic instability. Blocks the activity of the SRCAP chromatin remodeling complex by interacting with SRCAP complex member ZNHIT1 and inhibiting its interaction with the complex. This prevents the deposition of histone variant H2AZ1/H2A.Z at the nucleosomes of key lymphoid fate regulator genes which suppresses their expression and restricts lymphoid lineage commitment. The polypeptide is PCI domain-containing protein 2 (Pcid2) (Mus musculus (Mouse)).